A 98-amino-acid polypeptide reads, in one-letter code: Integration host factor subunit beta (98 aa).

Belongs to the bacterial histone-like protein family. Heterodimer of an alpha and a beta chain.

Its function is as follows. This protein is one of the two subunits of integration host factor, a specific DNA-binding protein that functions in genetic recombination as well as in transcriptional and translational control. In Pseudomonas fluorescens (strain Pf0-1), this protein is Integration host factor subunit beta.